Here is a 404-residue protein sequence, read N- to C-terminus: Phospho-N-acetylmuramoyl-pentapeptide-transferase (404 aa).

10 consecutive transmembrane segments (helical) span residues 30 to 50 (SAAI…IIFF), 73 to 93 (IPTM…LLFA), 100 to 120 (IMLL…DDYI), 132 to 152 (GKFK…TLIF), 209 to 229 (YMWI…SNGA), 242 to 262 (TSAI…NVIF), 274 to 294 (LAEL…FLWY), 301 to 321 (IFMG…LAIV), 326 to 346 (LMIP…IIQV), and 381 to 401 (KIVT…LVTL).

It belongs to the glycosyltransferase 4 family. MraY subfamily. Requires Mg(2+) as cofactor.

The protein resides in the cell inner membrane. It catalyses the reaction UDP-N-acetyl-alpha-D-muramoyl-L-alanyl-gamma-D-glutamyl-meso-2,6-diaminopimeloyl-D-alanyl-D-alanine + di-trans,octa-cis-undecaprenyl phosphate = di-trans,octa-cis-undecaprenyl diphospho-N-acetyl-alpha-D-muramoyl-L-alanyl-D-glutamyl-meso-2,6-diaminopimeloyl-D-alanyl-D-alanine + UMP. It functions in the pathway cell wall biogenesis; peptidoglycan biosynthesis. Its function is as follows. Catalyzes the initial step of the lipid cycle reactions in the biosynthesis of the cell wall peptidoglycan: transfers peptidoglycan precursor phospho-MurNAc-pentapeptide from UDP-MurNAc-pentapeptide onto the lipid carrier undecaprenyl phosphate, yielding undecaprenyl-pyrophosphoryl-MurNAc-pentapeptide, known as lipid I. The sequence is that of Phospho-N-acetylmuramoyl-pentapeptide-transferase from Amoebophilus asiaticus (strain 5a2).